The chain runs to 501 residues: Dynein regulatory complex subunit 5 (501 aa).

Residues 1–23 (MQDTVTTSALLDPSHSSVSTQDN) show a composition bias toward polar residues. 2 disordered regions span residues 1–56 (MQDT…HPRA) and 202–222 (LPAQ…EMEE). A compositionally biased stretch (low complexity) spans 24-34 (SSTGGHTSSTS). 5 LRR repeats span residues 308 to 321 (VLEE…LIGD), 335 to 355 (RLRV…QSLA), 363 to 383 (NLIS…QALA), 391 to 411 (CLTT…TLLS), and 419 to 439 (TLTS…KQLL).

It belongs to the DRC5 family. Component of the nexin-dynein regulatory complex (N-DRC). Interacts with DRC1. Interacts with FBXL13/DRC6, DRC3 and DRC7.

Its subcellular location is the cell projection. It localises to the cilium. It is found in the flagellum. The protein resides in the cytoplasm. The protein localises to the cytoskeleton. Its subcellular location is the flagellum axoneme. Functionally, component of the nexin-dynein regulatory complex (N-DRC) a key regulator of ciliary/flagellar motility which maintains the alignment and integrity of the distal axoneme and regulates microtubule sliding in motile axonemes. May play a role in the assembly of N-DRC. May be required for sperm motility. In Homo sapiens (Human), this protein is Dynein regulatory complex subunit 5 (TCTE1).